Here is a 413-residue protein sequence, read N- to C-terminus: Serine hydroxymethyltransferase (413 aa).

(6S)-5,6,7,8-tetrahydrofolate contacts are provided by residues Leu119 and 123-125 (GHL). Residue Lys228 is modified to N6-(pyridoxal phosphate)lysine. (6S)-5,6,7,8-tetrahydrofolate is bound at residue Glu243.

It belongs to the SHMT family. In terms of assembly, homodimer. Pyridoxal 5'-phosphate is required as a cofactor.

It is found in the cytoplasm. The enzyme catalyses (6R)-5,10-methylene-5,6,7,8-tetrahydrofolate + glycine + H2O = (6S)-5,6,7,8-tetrahydrofolate + L-serine. It functions in the pathway one-carbon metabolism; tetrahydrofolate interconversion. Its pathway is amino-acid biosynthesis; glycine biosynthesis; glycine from L-serine: step 1/1. Its function is as follows. Catalyzes the reversible interconversion of serine and glycine with tetrahydrofolate (THF) serving as the one-carbon carrier. This reaction serves as the major source of one-carbon groups required for the biosynthesis of purines, thymidylate, methionine, and other important biomolecules. Also exhibits THF-independent aldolase activity toward beta-hydroxyamino acids, producing glycine and aldehydes, via a retro-aldol mechanism. In Desulforamulus reducens (strain ATCC BAA-1160 / DSM 100696 / MI-1) (Desulfotomaculum reducens), this protein is Serine hydroxymethyltransferase.